The chain runs to 1156 residues: ATP-dependent RNA helicase glh-4 (1156 aa).

4 disordered regions span residues 1–81, 194–213, 231–423, and 436–522; these read MSFS…GAPS, TGVGASEVPTSKPSSFGQQP, SSSG…DSST, and HRAS…SGLG. A compositionally biased stretch (basic and acidic residues) spans 12–22; the sequence is AEVKVAEDVPE. A compositionally biased stretch (pro residues) spans 24-34; the sequence is NVPPPVEPPRA. 3 stretches are compositionally biased toward polar residues: residues 60 to 73, 194 to 211, and 243 to 258; these read ITTSKTFGSQTTPK, TGVGASEVPTSKPSSFGQ, and TESSGFPTKETSTSQP. A compositionally biased stretch (gly residues) spans 259–281; it reads GFGGDSSTGFGSGLKAGFGGHGA. Residues 307-319 show a composition bias toward polar residues; it reads ASSSNESAFGQQS. Gly residues-rich tracts occupy residues 321 to 332 and 342 to 358; these read GFGGATKNGFGG and SKAGFGGTSSSGIGGQK. Polar residues-rich tracts occupy residues 362-371 and 395-406; these read TESSGFPTKE and PSTTDSSSGQQT. Residues 408 to 423 are compositionally biased toward gly residues; that stretch reads GFGGASKPGFGGDSST. Composition is skewed to polar residues over residues 440 to 451 and 464 to 476; these read TAENSGLPTETT and ASSSNESAFGQQS. Over residues 478 to 489 the composition is skewed to gly residues; that stretch reads GFGGATKNGFGG. 5 consecutive CCHC-type zinc fingers follow at residues 570-587, 593-610, 616-633, 639-656, and 665-682; these read RGCHNCGEEGHISKECDK, FPCRNCEQLGHFASDCDQ, GPCRNCGIEGHFAVDCDQ, GPCRNCGQEGHFAKDCQN, and EPCRRCAEEGHWGYECPT. The Q motif motif lies at 736-764; sequence SFDGFKILPQDLHDNLKRMKMNRPTPIQR. The region spanning 767–951 is the Helicase ATP-binding domain; sequence FFPIMHGNDV…LPKFVKEGYT (185 aa). 780 to 787 provides a ligand contact to ATP; the sequence is AHTGSGKT. Residues 897 to 900 carry the DEAD box motif; that stretch reads DEAD. Residues 986–1139 form the Helicase C-terminal domain; it reads GIDENTVTLL…EVPEWLTEGA (154 aa). A disordered region spans residues 1135-1156; sequence LTEGAGHQEEGGDDWNEQEQEW. A compositionally biased stretch (acidic residues) spans 1145–1156; sequence GGDDWNEQEQEW.

The protein belongs to the DEAD box helicase family. DDX4/VASA subfamily. In terms of assembly, interacts (via C-terminus) with kgb-1.

The enzyme catalyses ATP + H2O = ADP + phosphate + H(+). Probable ATP-binding RNA helicase. May act redundantly with the P-granule component glh-1 to regulate the formation of the granular structure of P-granules in embryos. May protect somatic cells from excessive apoptosis during normal development. The polypeptide is ATP-dependent RNA helicase glh-4 (Caenorhabditis elegans).